We begin with the raw amino-acid sequence, 434 residues long: 3-phosphoshikimate 1-carboxyvinyltransferase (434 aa).

Residues Lys22, Ser23, and Arg27 each contribute to the 3-phosphoshikimate site. Residue Lys22 coordinates phosphoenolpyruvate. Residues Gly93 and Arg121 each coordinate phosphoenolpyruvate. Residues Ser168, Ser169, Gln170, Ser199, Asp320, and Lys347 each coordinate 3-phosphoshikimate. Gln170 is a phosphoenolpyruvate binding site. The active-site Proton acceptor is the Asp320. Residues Arg351, Arg394, and Lys419 each contribute to the phosphoenolpyruvate site.

Belongs to the EPSP synthase family. Monomer.

Its subcellular location is the cytoplasm. It catalyses the reaction 3-phosphoshikimate + phosphoenolpyruvate = 5-O-(1-carboxyvinyl)-3-phosphoshikimate + phosphate. It participates in metabolic intermediate biosynthesis; chorismate biosynthesis; chorismate from D-erythrose 4-phosphate and phosphoenolpyruvate: step 6/7. Functionally, catalyzes the transfer of the enolpyruvyl moiety of phosphoenolpyruvate (PEP) to the 5-hydroxyl of shikimate-3-phosphate (S3P) to produce enolpyruvyl shikimate-3-phosphate and inorganic phosphate. This Burkholderia orbicola (strain MC0-3) protein is 3-phosphoshikimate 1-carboxyvinyltransferase.